An 89-amino-acid polypeptide reads, in one-letter code: Small ribosomal subunit protein uS15 (89 aa).

This sequence belongs to the universal ribosomal protein uS15 family. As to quaternary structure, part of the 30S ribosomal subunit. Forms a bridge to the 50S subunit in the 70S ribosome, contacting the 23S rRNA.

One of the primary rRNA binding proteins, it binds directly to 16S rRNA where it helps nucleate assembly of the platform of the 30S subunit by binding and bridging several RNA helices of the 16S rRNA. In terms of biological role, forms an intersubunit bridge (bridge B4) with the 23S rRNA of the 50S subunit in the ribosome. This chain is Small ribosomal subunit protein uS15, found in Desulforapulum autotrophicum (strain ATCC 43914 / DSM 3382 / VKM B-1955 / HRM2) (Desulfobacterium autotrophicum).